Reading from the N-terminus, the 201-residue chain is Peptide deformylase (201 aa).

Residues Met-1 to Ile-21 form a disordered region. Residues Cys-121 and His-163 each contribute to the Fe cation site. Glu-164 is an active-site residue. A Fe cation-binding site is contributed by His-167.

It belongs to the polypeptide deformylase family. Requires Fe(2+) as cofactor.

The enzyme catalyses N-terminal N-formyl-L-methionyl-[peptide] + H2O = N-terminal L-methionyl-[peptide] + formate. Removes the formyl group from the N-terminal Met of newly synthesized proteins. Requires at least a dipeptide for an efficient rate of reaction. N-terminal L-methionine is a prerequisite for activity but the enzyme has broad specificity at other positions. The chain is Peptide deformylase from Prochlorococcus marinus (strain AS9601).